Consider the following 94-residue polypeptide: MSIKPLGDRVVIKRLEAEETTKSGIIVTGTAKERPQEAEVVAVGPGAIVDGKRTEMEVKIGDKVLYSKYAGTEVKFEGEEYTILRQDDILAIVE.

The protein belongs to the GroES chaperonin family. Heptamer of 7 subunits arranged in a ring. Interacts with the chaperonin GroEL.

The protein resides in the cytoplasm. Its function is as follows. Together with the chaperonin GroEL, plays an essential role in assisting protein folding. The GroEL-GroES system forms a nano-cage that allows encapsulation of the non-native substrate proteins and provides a physical environment optimized to promote and accelerate protein folding. GroES binds to the apical surface of the GroEL ring, thereby capping the opening of the GroEL channel. The chain is Co-chaperonin GroES from Clostridium perfringens (strain ATCC 13124 / DSM 756 / JCM 1290 / NCIMB 6125 / NCTC 8237 / Type A).